The chain runs to 71 residues: Large ribosomal subunit protein bL31 (71 aa).

Cys16, Cys18, Cys37, and Cys40 together coordinate Zn(2+).

The protein belongs to the bacterial ribosomal protein bL31 family. Type A subfamily. In terms of assembly, part of the 50S ribosomal subunit. It depends on Zn(2+) as a cofactor.

Functionally, binds the 23S rRNA. The sequence is that of Large ribosomal subunit protein bL31 from Pseudoalteromonas translucida (strain TAC 125).